Consider the following 115-residue polypeptide: T cell receptor beta variable 11-1 (115 aa).

The N-terminal stretch at 1 to 21 is a signal peptide; it reads MSTRLLCWMALCLLGAELSEA. Residues 22–115 enclose the Ig-like domain; that stretch reads EVAQSPRYKI…SAMYLCASSL (94 aa). A disulfide bridge connects residues C42 and C111.

As to quaternary structure, alpha-beta TR is a heterodimer composed of an alpha and beta chain; disulfide-linked. The alpha-beta TR is associated with the transmembrane signaling CD3 coreceptor proteins to form the TR-CD3 (TcR or TCR). The assembly of alpha-beta TR heterodimers with CD3 occurs in the endoplasmic reticulum where a single alpha-beta TR heterodimer associates with one CD3D-CD3E heterodimer, one CD3G-CD3E heterodimer and one CD247 homodimer forming a stable octameric structure. CD3D-CD3E and CD3G-CD3E heterodimers preferentially associate with TR alpha and TR beta chains, respectively. The association of the CD247 homodimer is the last step of TcR assembly in the endoplasmic reticulum and is required for transport to the cell surface.

It is found in the cell membrane. Functionally, v region of the variable domain of T cell receptor (TR) beta chain that participates in the antigen recognition. Alpha-beta T cell receptors are antigen specific receptors which are essential to the immune response and are present on the cell surface of T lymphocytes. Recognize peptide-major histocompatibility (MH) (pMH) complexes that are displayed by antigen presenting cells (APC), a prerequisite for efficient T cell adaptive immunity against pathogens. Binding of alpha-beta TR to pMH complex initiates TR-CD3 clustering on the cell surface and intracellular activation of LCK that phosphorylates the ITAM motifs of CD3G, CD3D, CD3E and CD247 enabling the recruitment of ZAP70. In turn ZAP70 phosphorylates LAT, which recruits numerous signaling molecules to form the LAT signalosome. The LAT signalosome propagates signal branching to three major signaling pathways, the calcium, the mitogen-activated protein kinase (MAPK) kinase and the nuclear factor NF-kappa-B (NF-kB) pathways, leading to the mobilization of transcription factors that are critical for gene expression and essential for T cell growth and differentiation. The T cell repertoire is generated in the thymus, by V-(D)-J rearrangement. This repertoire is then shaped by intrathymic selection events to generate a peripheral T cell pool of self-MH restricted, non-autoaggressive T cells. Post-thymic interaction of alpha-beta TR with the pMH complexes shapes TR structural and functional avidity. In Homo sapiens (Human), this protein is T cell receptor beta variable 11-1.